Consider the following 180-residue polypeptide: Inner membrane-spanning protein YciB (180 aa).

A run of 5 helical transmembrane segments spans residues Gln-25–Ile-45, Val-49–Ile-69, Ile-76–Ile-96, Ile-118–Val-138, and Phe-150–Leu-170.

Belongs to the YciB family.

It is found in the cell inner membrane. Its function is as follows. Plays a role in cell envelope biogenesis, maintenance of cell envelope integrity and membrane homeostasis. The polypeptide is Inner membrane-spanning protein YciB (Rickettsia prowazekii (strain Madrid E)).